Here is a 493-residue protein sequence, read N- to C-terminus: Cytochrome P450 monooxygenase olcG (493 aa).

A helical membrane pass occupies residues Gly15 to Phe35. Cys429 is a heme binding site.

Belongs to the cytochrome P450 family. Heme is required as a cofactor.

The protein localises to the membrane. It participates in secondary metabolite biosynthesis; terpenoid biosynthesis. In terms of biological role, cytochrome P450 monooxygenase; part of the gene cluster that mediates the biosynthesis of 15-deoxyoxalicine B. The first step of the pathway is the synthesis of nicotinyl-CoA from nicotinic acid by the nicotinic acid-CoA ligase olcI. Nicotinyl-CoA is then a substrate of polyketide synthase olcA to produce 4-hydroxy-6-(3-pyridinyl)-2H-pyran-2-one (HPPO) which is further prenylated by the polyprenyl transferase olcH to yield geranylgeranyl-HPPO. Geranylgeranyl pyrophosphate is provided by the cluster-specific geranylgeranyl pyrophosphate synthase olcC. The FAD-dependent monooxygenase olcE catalyzes the epoxidation of geranylgeranyl-HPPO and the terpene cyclase olcD catalyzes the cyclization of the terpenoid component, resulting in the formation of the tricyclic terpene moiety seen in predecaturin E. The cytochrome P450 monooxygenase then catalyzes the allylic oxidation of predecaturin E, which is followed by spirocylization with concomitant loss of one molecule of water to form decaturin E. Decaturin E is the substrate of the cytochrome P450 monooxygenase olcJ which hydroxylates it at the C-29 position to form decaturin F. The short-chain dehydrogenase/reductase olcF may catalyze the oxidation of decaturin F to generate the 29-hydroxyl-27-one intermediate, and subsequent hemiacetal formation probably leads to the formation of decaturin C. The dioxygenase olcK may be a peroxisomal enzyme that catalyzes the hydroxylation of decaturin C into decaturin A once decaturin C is shuttled into the peroxisome by the MFS transporter olcL. Finally the cytochrome P450 monooxygenase olcB catalyzes the oxidative rearrangement to yield 15-deoxyoxalicine B. In the absence of olcJ, decaturin E may be shunted to a pathway in which it is oxidized to a ketone, possibly by olcF, to form decaturin D, which undergoes further allylic oxidation to yield decaturin G. Moreover, in the absence of oclK or oclL, oclB can convert decaturin C into 15-deoxyoxalicine A. This chain is Cytochrome P450 monooxygenase olcG, found in Penicillium canescens.